A 237-amino-acid chain; its full sequence is MSDPAQEVEAPVEAAPVASSPKGKKEKAPKAPKAEKPKSDKPKKPKAAPTHPPVSEMVVNAITTLKERGGSSLIAIKKFVAAQYKVDVEKLVPFIKKFLKASVAKGTLLQAKGKGASGSFKLPPAAKKVDKPKKAPATPKPKSTKPKRVTGEKKVVKKPAAKKPEAKKATKAAKPAAKKVAAKPAAKKAAAPKPKAAAKPKKEVKPKKEAKPKKAAAKPAKKPAAKPAKKPAAKKAK.

The span at 1–21 (MSDPAQEVEAPVEAAPVASSP) shows a compositional bias: low complexity. Disordered stretches follow at residues 1–56 (MSDP…PVSE) and 109–237 (LQAK…KKAK). Over residues 26-42 (EKAPKAPKAEKPKSDKP) the composition is skewed to basic and acidic residues. The H15 domain occupies 50 to 124 (THPPVSEMVV…GASGSFKLPP (75 aa)). Over residues 182–195 (AKPAAKKAAAPKPK) the composition is skewed to low complexity. Residues 200 to 209 (PKKEVKPKKE) show a composition bias toward basic and acidic residues. The segment covering 210 to 237 (AKPKKAAAKPAKKPAAKPAKKPAAKKAK) has biased composition (basic residues).

It belongs to the histone H1/H5 family.

It is found in the nucleus. It localises to the chromosome. In terms of biological role, histones H1 are necessary for the condensation of nucleosome chains into higher-order structures. The chain is Histone H1E from Chironomus tentans (Midge).